The sequence spans 214 residues: Alkaline phosphatase-like protein (214 aa).

3 consecutive transmembrane segments (helical) span residues L48 to L68, F141 to A161, and Y177 to V197.

The protein belongs to the DedA family.

It localises to the cell membrane. This chain is Alkaline phosphatase-like protein (apl), found in Lactococcus lactis subsp. lactis (strain IL1403) (Streptococcus lactis).